Here is a 425-residue protein sequence, read N- to C-terminus: UPF0761 membrane protein xcc-b100_3490 (425 aa).

The next 6 membrane-spanning stretches (helical) occupy residues 48 to 68 (VFALVPLAIVVFGVLSAFPAF), 105 to 125 (FTVAGMVALVASLLITLHSIE), 154 to 174 (GTMLAAASMAMAAYVFALPLF), 182 to 202 (LAEFAWRLAPMAVEFVCIVLI), 216 to 236 (ALPGALLAVILMEIVKWGFGF), and 250 to 270 (ALSALPILLLWIYLSWVSVLL).

Belongs to the UPF0761 family.

It is found in the cell inner membrane. The polypeptide is UPF0761 membrane protein xcc-b100_3490 (Xanthomonas campestris pv. campestris (strain B100)).